A 189-amino-acid polypeptide reads, in one-letter code: MTSIDEAAPGRSAASDAAADVLRGHIRDIQDWPQPGVVFKDITPLLSTPAAFGVVVGALVDVARERGATTIAGIEARGFLLAAPVADRLGAALVPIRKQGKLPGPTRSATYDLEYGTATIEIHADAVRPDERVLLVDDVLATGGTAAAAHGLLAGVGAEVVGLAVLMELSFLPGRERVAPLDVVPLLTI.

Belongs to the purine/pyrimidine phosphoribosyltransferase family. Homodimer.

The protein localises to the cytoplasm. The catalysed reaction is AMP + diphosphate = 5-phospho-alpha-D-ribose 1-diphosphate + adenine. The protein operates within purine metabolism; AMP biosynthesis via salvage pathway; AMP from adenine: step 1/1. Functionally, catalyzes a salvage reaction resulting in the formation of AMP, that is energically less costly than de novo synthesis. The sequence is that of Adenine phosphoribosyltransferase from Frankia alni (strain DSM 45986 / CECT 9034 / ACN14a).